Consider the following 734-residue polypeptide: MHNKDKLMRCMYSMQTRLGEKDINLPQYYNNRELSWLDFNYRVLQESYDKNNPLLEKLNFISIFSSNLDEFFMVRVAGLKDQVKMGYDKPENKAQMTPQEQLDAIKIKNTDYVNTQYQRYNELIKELANYDIEMVKPEDLSDALIEKLEQEFKLSVLPTLTPLGIDAYHPFPKLNNKSLNIFVDIDTEDAINSAIVQIPSLIPRFLTLNEGTKQYVVMVEDVITYFINYLFTGYEVLNTFTFRITRNADLTIHEDGAEDLLIEIERFLKERKSGSAVRLELDCRTSEKENVEWLINQLEIEDNDIYYLDGPLDLTFLFGLVDHLSHKLKYLTYEKYTPQPPRSLGNKNIYQLSLERDIFFHHPYESFEPIVDFIRQAADDPNTIAIKQTLYRVSKDSPIINSLKEAAENGKQVTVLVELKARFDEENNVHWARMLEDAGCHVIYGMTHLKTHSKIALVVKRINNELTSFVHLGTGNYNDKTAKLYTDMGIITTNKDIAEDAINFFNYLSGYSTKPEYNKLIVAPYDIRDVFIDRIDKEIRSHLQHGNGKIMMKMNSLTDKTIIEKLFEASQAGVKIQLIIRGICCLKPGIPGISENIEVVSIVGRLLEHSRIYYFHNNSEAHIYLSSADVMTRNMIKRVEILFPVEDKSIGQRLVNYMNLQLSDNQKGRYQDAQGLYHYVENNSSPLNSQSYLMQEAIKYGEELKKQSVQPSGQPVHSRRGGSWMRKLKNTFKR.

N67 is a binding site for ATP. The Mg(2+) site is built by R392 and R422. Positions 447–481 (THLKTHSKIALVVKRINNELTSFVHLGTGNYNDKT) constitute a PLD phosphodiesterase domain. H452 functions as the Phosphohistidine intermediate in the catalytic mechanism. 3 residues coordinate ATP: Y485, R581, and H609. A disordered region spans residues 705–734 (KKQSVQPSGQPVHSRRGGSWMRKLKNTFKR).

It belongs to the polyphosphate kinase 1 (PPK1) family. Requires Mg(2+) as cofactor. In terms of processing, an intermediate of this reaction is the autophosphorylated ppk in which a phosphate is covalently linked to a histidine residue through a N-P bond.

The catalysed reaction is [phosphate](n) + ATP = [phosphate](n+1) + ADP. Catalyzes the reversible transfer of the terminal phosphate of ATP to form a long-chain polyphosphate (polyP). The sequence is that of Polyphosphate kinase from Staphylococcus epidermidis (strain ATCC 12228 / FDA PCI 1200).